Consider the following 253-residue polypeptide: Decarboxylase DEC1 (253 aa).

The active-site Schiff-base intermediate with acetoacetate is the K121.

It belongs to the ADC family.

The protein operates within mycotoxin biosynthesis. In terms of biological role, decarboxylase; part of the Tox1B locus, one of the 2 loci that mediate the biosynthesis of T-toxin, a family of linear polyketides 37 to 45 carbons in length, of which the major component is 41 carbons, and which leads to high virulence to maize. One of the PKSs (PKS1 or PKS2) could synthesize a precursor, used subsequently by the other PKS as starter unit, to add additional carbons. Variability in the length of the final carbon backbone C35-47 could be achieved by varying the number of condensation cycles, or use of different starter or extender units or might be due to decarboxylation of the penultimate product, catalyzed by DEC1. Additional proteins are required for the biosynthesis of T-toxin, including oxidoreductases RED1, RED2, RED3, LAM1 and OXI1, as well as esterase TOX9. In Cochliobolus heterostrophus (strain C4 / ATCC 48331 / race T) (Southern corn leaf blight fungus), this protein is Decarboxylase DEC1.